Reading from the N-terminus, the 413-residue chain is L-cysteine:1D-myo-inositol 2-amino-2-deoxy-alpha-D-glucopyranoside ligase (413 aa).

Cys15 lines the Zn(2+) pocket. L-cysteinyl-5'-AMP-binding positions include 15–18 (CGIT), Thr30, and 53–55 (NVT). A 'HIGH' region motif is present at residues 17-27 (ITPYDATHLGH). Positions 155-160 (ERGGDP) match the 'ERGGDP' region motif. Trp195 is a binding site for L-cysteinyl-5'-AMP. Residue Cys199 participates in Zn(2+) binding. Residue 217–219 (GTD) participates in L-cysteinyl-5'-AMP binding. Residue His224 participates in Zn(2+) binding. Val251 contacts L-cysteinyl-5'-AMP. Positions 257–261 (KMSKS) match the 'KMSKS' region motif.

The protein belongs to the class-I aminoacyl-tRNA synthetase family. MshC subfamily. Monomer. It depends on Zn(2+) as a cofactor.

It catalyses the reaction 1D-myo-inositol 2-amino-2-deoxy-alpha-D-glucopyranoside + L-cysteine + ATP = 1D-myo-inositol 2-(L-cysteinylamino)-2-deoxy-alpha-D-glucopyranoside + AMP + diphosphate + H(+). Functionally, catalyzes the ATP-dependent condensation of GlcN-Ins and L-cysteine to form L-Cys-GlcN-Ins. This is L-cysteine:1D-myo-inositol 2-amino-2-deoxy-alpha-D-glucopyranoside ligase from Frankia alni (strain DSM 45986 / CECT 9034 / ACN14a).